Reading from the N-terminus, the 238-residue chain is Cysteine-rich venom protein pseudechetoxin-like (238 aa).

Positions 1–19 (MIAFLVLLSLAAVLQQSSG) are cleaved as a signal peptide. Positions 20-28 (TVDFASESS) are excised as a propeptide. Residues 38 to 164 (VDKHNDLRRS…STKYLYVCQY (127 aa)) form the SCP domain. Disulfide bonds link Cys75–Cys153, Cys92–Cys165, Cys148–Cys162, Cys184–Cys191, Cys187–Cys196, Cys200–Cys233, Cys209–Cys227, and Cys218–Cys231. The ShKT domain occupies 200–233 (CKHNDDLSNCKTLVKKHKCQTEWIKSKCPATCFC).

It belongs to the CRISP family. As to expression, expressed by the venom gland.

The protein localises to the secreted. In terms of biological role, blocks olfactory (CNGA2) and retinal (CNGA1) CNG channel currents. Does not affect neither depolarization- nor caffeine-induced contraction of smooth muscle. This chain is Cysteine-rich venom protein pseudechetoxin-like, found in Pseudonaja textilis (Eastern brown snake).